A 202-amino-acid chain; its full sequence is Endothelin-1 (202 aa).

An N-terminal signal peptide occupies residues 1–25 (MDYFPVIFSLLFVTFQGAPETAVLG). Residues 26-50 (AELSTGAENGVQSPPPSTPWRPRRS) constitute a propeptide that is removed on maturation. 2 cysteine pairs are disulfide-bonded: cysteine 53–cysteine 67 and cysteine 55–cysteine 63. The propeptide occupies 74–202 (VNTPERVVPY…DQKLTHNRAH (129 aa)). The tract at residues 110–124 (CQCAHQKDKKCWNFC) is endothelin-like.

It belongs to the endothelin/sarafotoxin family. In terms of tissue distribution, highest expression in the adult is in lung. Lower levels found in heart, kidney, brain and intestine. In the embryo, expressed in outer and inner pharyngeal arch surfaces. Also expressed in endothelium of dorsal aorta and arch arteries, and in epithelium of pharyngeal pouches.

The protein localises to the secreted. Its function is as follows. Endothelins are endothelium-derived vasoconstrictor peptides. Probable ligand for G-protein coupled receptors EDNRA and EDNRB which activates PTK2B, BCAR1, BCAR3 and, GTPases RAP1 and RHOA cascade in glomerular mesangial cells. Also binds the DEAR/FBXW7-AS1 receptor. Promotes mesenteric arterial wall remodeling via activation of ROCK signaling and subsequent colocalization of NFATC3 with F-actin filaments. NFATC3 then translocates to the nucleus where it subsequently promotes the transcription of the smooth muscle hypertrophy and differentiation marker ACTA2. This is Endothelin-1 (Edn1) from Mus musculus (Mouse).